The chain runs to 315 residues: Olfactory receptor 4A8 (315 aa).

At 1-24 the chain is on the extracellular side; sequence MRQNNNITEFVLLGFSQYPDVQNA. An N-linked (GlcNAc...) asparagine glycan is attached at Asn6. Residues 25–45 form a helical membrane-spanning segment; it reads LFVMFLLIYIVTMVGNLLIVV. The Cytoplasmic segment spans residues 46–57; the sequence is SIIASPFLGSPV. Residues 58 to 80 form a helical membrane-spanning segment; that stretch reads YFFLACLSFIDAVYSTTISPVLI. Over 81-95 the chain is Extracellular; that stretch reads VDLLCDKKTISFPAC. Cys95 and Cys177 form a disulfide bridge. The chain crosses the membrane as a helical span at residues 96 to 116; sequence MGQLFIEHLFGDTDVFLLVVM. Residues 117-139 lie on the Cytoplasmic side of the membrane; it reads AYDRYVATCKPLRYLTIMNRQVC. The helical transmembrane segment at 140 to 160 threads the bilayer; the sequence is ILLLVVAVTGGFLHSVFQILV. The Extracellular portion of the chain corresponds to 161–193; that stretch reads VYSLPFCGPNVIYHFFCNIYPLLDLECTDTYFV. The helical transmembrane segment at 194-214 threads the bilayer; the sequence is GLAVVFNGGAICMVIFTLLLI. Residues 215-235 lie on the Cytoplasmic side of the membrane; that stretch reads SYGVILNSLKTYSPEGRHKAP. A helical membrane pass occupies residues 236 to 256; it reads FICSSHFIMVILFFVPCIFLY. Topologically, residues 257 to 266 are extracellular; it reads VRPVSNFPID. Residues 267 to 287 form a helical membrane-spanning segment; it reads KFLTVFYSVITPKLNPFIYML. Over 288-315 the chain is Cytoplasmic; sequence RNSEMRNAIENLLGYQSGKTGFRCSKLN.

This sequence belongs to the G-protein coupled receptor 1 family.

The protein resides in the cell membrane. Functionally, odorant receptor. The protein is Olfactory receptor 4A8 (OR4A8) of Homo sapiens (Human).